We begin with the raw amino-acid sequence, 50 residues long: uncharacterized protein (50 aa).

This is an uncharacterized protein from Thermoproteus tenax virus 1 (strain KRA1) (TTV1).